We begin with the raw amino-acid sequence, 191 residues long: Probable protein-S-isoprenylcysteine O-methyltransferase (191 aa).

3 helical membrane passes run 8 to 28 (WLFA…AAAF), 45 to 65 (YVLA…LFPE), and 66 to 86 (LKEY…GEVI). Residues 110 to 113 (HKLI), Tyr118, and 123 to 126 (HPGY) each bind S-adenosyl-L-methionine. A helical membrane pass occupies residues 129–149 (FLIWAVGTQVMLCNPLSTVAF). Substrate is bound at residue Arg160. An S-adenosyl-L-methionine-binding site is contributed by Glu164.

This sequence belongs to the class VI-like SAM-binding methyltransferase superfamily. Isoprenylcysteine carboxyl methyltransferase family. The cofactor is Zn(2+).

The protein resides in the endoplasmic reticulum membrane. The catalysed reaction is [protein]-C-terminal S-[(2E,6E)-farnesyl]-L-cysteine + S-adenosyl-L-methionine = [protein]-C-terminal S-[(2E,6E)-farnesyl]-L-cysteine methyl ester + S-adenosyl-L-homocysteine. Its function is as follows. Catalyzes the post-translational methylation of isoprenylated C-terminal cysteine residues. Carboxyl methylation is a reversible and potentially regulated step in the post-translational modification of prenylated proteins. This Oryza sativa subsp. indica (Rice) protein is Probable protein-S-isoprenylcysteine O-methyltransferase (ICMT).